A 171-amino-acid polypeptide reads, in one-letter code: Transcriptional repressor NrdR (171 aa).

The disordered stretch occupies residues 1-21; that stretch reads MQCPHCQHTDSRVLESRSSEN. A zinc finger spans residues 3–34; the sequence is CPHCQHTDSRVLESRSSENGQSIRRRRECLQC. The span at 7–18 shows a compositional bias: basic and acidic residues; the sequence is QHTDSRVLESRS. The region spanning 49 to 139 is the ATP-cone domain; that stretch reads ITVIKKDGKR…VYGNFQGIRD (91 aa).

The protein belongs to the NrdR family. Requires Zn(2+) as cofactor.

Negatively regulates transcription of bacterial ribonucleotide reductase nrd genes and operons by binding to NrdR-boxes. The sequence is that of Transcriptional repressor NrdR from Microcystis aeruginosa (strain NIES-843 / IAM M-2473).